The primary structure comprises 451 residues: MSIQSNEILETIRMVADQNFDVRTITVGIDLHDCISCDIDELNRNIYRKITTVGKDLVETANILSAKYGVPIVNQRISVTPIAQIAAATKADSYVSVAQTLDRAAKAIGVSFIGGFSALVQKGMSPSDEVLIRSIPEAMKTTDIVCSSINIGSTRAGINMDAVKLAGETIKRTADITPEGFGCAKIVVFCNAVEDNPFMAGAFHGAGEADAVINVGVSGPGVVKEALANSHADTLTEVAEVVKKTAFKITRVGELIGQEAAKMLNIPFGILDLSLAPTPAIGDSVARILETMGLTVCGTHGTTAALALLNDAVKKGGMMASGSVGGLSGAFIPVSEDEGMIAAAESGILTLDKLEAMTAVCSVGLDMIAVPGKTPAHTLSGIIADEAAIGMINGKTTAVRIIPVTGKDVGESVEFGGLLGYAPIMPVKEGSCEIFVNRGGRIPAPVQSMKN.

It belongs to the UPF0210 family. In terms of assembly, homodimer.

This Actinobacillus succinogenes (strain ATCC 55618 / DSM 22257 / CCUG 43843 / 130Z) protein is UPF0210 protein Asuc_1169.